The chain runs to 464 residues: Protein FAM90A23 (464 aa).

Disordered regions lie at residues 1–42 (MMAR…DPRL), 69–389 (VPAT…HDGA), and 415–437 (HSPEKPGAFLAQSPHVSEKSEAP). Composition is skewed to basic and acidic residues over residues 74–89 (GKKEGKENLKPWKPRA) and 97–114 (NKDKGEKEERPRQQDPQR). The segment covering 180-197 (LASLSPLRKASLSSSSSL) has biased composition (low complexity).

It belongs to the FAM90 family.

This Homo sapiens (Human) protein is Protein FAM90A23.